Consider the following 273-residue polypeptide: NH(3)-dependent NAD(+) synthetase (273 aa).

Residue 47–54 (GISGGQDS) coordinates ATP. Position 53 (Asp53) interacts with Mg(2+). Arg139 lines the deamido-NAD(+) pocket. Thr159 contributes to the ATP binding site. Glu164 is a binding site for Mg(2+). Lys172 and Asp179 together coordinate deamido-NAD(+). 2 residues coordinate ATP: Lys188 and Thr210. 259-260 (HK) is a deamido-NAD(+) binding site.

This sequence belongs to the NAD synthetase family. Homodimer.

The enzyme catalyses deamido-NAD(+) + NH4(+) + ATP = AMP + diphosphate + NAD(+) + H(+). The protein operates within cofactor biosynthesis; NAD(+) biosynthesis; NAD(+) from deamido-NAD(+) (ammonia route): step 1/1. In terms of biological role, catalyzes the ATP-dependent amidation of deamido-NAD to form NAD. Uses ammonia as a nitrogen source. This chain is NH(3)-dependent NAD(+) synthetase, found in Staphylococcus aureus (strain MRSA252).